A 469-amino-acid polypeptide reads, in one-letter code: Pancreatic lipase-related protein 2 (469 aa).

The first 17 residues, 1–17, serve as a signal peptide directing secretion; sequence MLPPWTLGLLLLATVRG. Cysteines 21 and 27 form a disulfide. Positions 93 to 105 are required for galactolipase activity; it reads IHGFLDKAEDSWP. A disulfide bridge connects residues Cys109 and Cys120. The active-site Nucleophile is Ser171. Asp195 functions as the Charge relay system in the catalytic mechanism. Positions 206, 209, 211, and 214 each coordinate Ca(2+). A disulfide bond links Cys256 and Cys280. The required for galactolipase activity stretch occupies residues 257-279; the sequence is KKNVLSTITDIDGIWEGIGGFVS. His282 serves as the catalytic Charge relay system. 2 disulfide bridges follow: Cys304–Cys315 and Cys318–Cys323. N-linked (GlcNAc...) asparagine glycosylation is found at Asn353 and Asn428. Residues 357-469 form the PLAT domain; sequence WRYKISVTLS…ENVLQSLYPC (113 aa). A disulfide bond links Cys453 and Cys469.

The protein belongs to the AB hydrolase superfamily. Lipase family. Pancreas.

It is found in the secreted. It localises to the zymogen granule membrane. The protein localises to the cell projection. The protein resides in the neuron projection. It catalyses the reaction a triacylglycerol + H2O = a diacylglycerol + a fatty acid + H(+). It carries out the reaction a 1,2-diacyl-3-O-(beta-D-galactosyl)-sn-glycerol + 2 H2O = 3-beta-D-galactosyl-sn-glycerol + 2 a fatty acid + 2 H(+). The enzyme catalyses 1,2,3-tri-(9Z-octadecenoyl)-glycerol + H2O = di-(9Z)-octadecenoylglycerol + (9Z)-octadecenoate + H(+). The catalysed reaction is di-(9Z)-octadecenoylglycerol + H2O = (9Z-octadecenoyl)-glycerol + (9Z)-octadecenoate + H(+). It catalyses the reaction (9Z-octadecenoyl)-glycerol + H2O = glycerol + (9Z)-octadecenoate + H(+). It carries out the reaction 1-(9Z-octadecenoyl)-glycerol + H2O = glycerol + (9Z)-octadecenoate + H(+). The enzyme catalyses 1,2,3-tripropanoylglycerol + H2O = dipropanoylglycerol + propanoate + H(+). The catalysed reaction is 1,2,3-tributanoylglycerol + H2O = dibutanoylglycerol + butanoate + H(+). It catalyses the reaction 1,2,3-trioctanoylglycerol + H2O = dioctanoylglycerol + octanoate + H(+). It carries out the reaction 1,2-didecanoylglycerol + H2O = decanoylglycerol + decanoate + H(+). The enzyme catalyses long chain 1,2-diacyl-3-O-beta-D-galactosyl-sn-glycerol + H2O = long chain acyl-3-O-beta-D-galactosyl-sn-glycerol + a fatty acid + H(+). The catalysed reaction is 1,2-dioctanoyl-3-O-beta-D-galactosyl-sn-glycerol + H2O = octanoyl-3-(beta-D-galactosyl)-sn-glycerol + octanoate + H(+). It catalyses the reaction 1,2-didodecanoyl-3-beta-D-galactosyl-sn-glycerol + H2O = dodecanoyl-3-beta-D-galactosyl-sn-glycerol + dodecanoate + H(+). It carries out the reaction 1-beta-D-galactosyl-2,3-didodecanoyl-sn-glycerol + H2O = 1-beta-D-galactosyl-dodecanoyl-sn-glycerol + dodecanoate + H(+). The enzyme catalyses a 1,2-diacyl-3-O-[alpha-D-galactosyl-(1-&gt;6)-beta-D-galactosyl]-sn-glycerol + H2O = acyl-3-O-[alpha-D-galactosyl-(1-&gt;6)-beta-D-galactosyl]-sn-glycerol + a fatty acid + H(+). The catalysed reaction is long chain 1,2-diacyl-3-O-[alpha-D-galactosyl-(1-&gt;6)-beta-D-galactosyl]-sn-glycerol + H2O = long chain acyl-3-O-[alpha-D-galactosyl-(1-&gt;6)-beta-D-galactosyl]-sn-glycerol + a fatty acid + H(+). It catalyses the reaction 1,2-dioctanoyl-3-O-[alpha-D-galactosyl-(1-&gt;6)-beta-D-galactosyl]-sn-glycerol + H2O = octanoyl-3-O-[alpha-D-galactosyl-(1-&gt;6)-beta-D-galactosyl]-sn-glycerol + octanoate + H(+). It carries out the reaction 1,2-didodecanoyl-3-O-[alpha-D-galactosyl-(1-&gt;6)-beta-D-galactosyl]-sn-glycerol + H2O = dodecanoyl-3-O-[alpha-D-galactosyl-(1-&gt;6)-beta-D-galactosyl]-sn-glycerol + dodecanoate + H(+). The enzyme catalyses a 1,2-diacyl-sn-glycero-3-phosphocholine + H2O = a monoacyl-sn-glycero-3-phosphocholine + a fatty acid + H(+). It participates in glycerolipid metabolism; triacylglycerol degradation. Its pathway is glycolipid metabolism. With respect to regulation, regulated by CLPS and bile salts levels ranging 1-5 mM in neonates and 2-30 mM in healthy adults. CLPS stimulates milk fat digestion in the presence of 4 mM bile salts. Triacylglycerol lipase activity toward short- and medium-chain triglycerides is inhibited by increasing concentrations of bile salts and weakly reactivated by CLPS. Optimal triacylglycerol lipase activity is reached at bile salts concentrations ranging from 0.1 to 0.5 mM and then decreases at concentrations higher than 1 mM. Lipase activity toward long-chain glycerolipids is stimulated by CLPS in the presence of 4 mM bile salts. Galactolipase activity is inhibited at high concentrations of bile salts. Triacylglycerol lipase activity is inhibited by anti-obesity drug tetrahydrolipstatin. Functionally, lipase that primarily hydrolyzes triglycerides and galactosylglycerides. In neonates, may play a major role in pancreatic digestion of dietary fats such as milk fat globules enriched in long-chain triglycerides. Hydrolyzes short-, medium- and long-chain fatty acyls in triglycerides without apparent positional specificity. Can completely deacylate triacylglycerols. When the liver matures and bile salt synthesis increases, likely functions mainly as a galactolipase and monoacylglycerol lipase. Hydrolyzes monogalactosyldiglycerols (MGDG) and digalactosyldiacylglycerols (DGDG) present in a plant-based diet, releasing long-chain polyunsaturated fatty acids. Hydrolyzes medium- and long-chain fatty acyls in galactolipids. May act together with LIPF to hydrolyze partially digested triglycerides. Hydrolyzes long-chain monoglycerides with high efficiency. In cytotoxic T cells, contributes to perforin-dependent cell lysis, but is unlikely to mediate direct cytotoxicity. Also has low phospholipase activity. In neurons, required for the localization of the phospholipid 1-oleoyl-2-palmitoyl-PC (OPPC) to neurite tips through acyl chain remodeling of membrane phospholipids. The resulting OPPC-rich lipid membrane domain recruits the t-SNARE protein STX4 by selectively interacting with the STX4 transmembrane domain and this promotes surface expression of the dopamine transporter SLC6A3/DAT at neurite tips by facilitating fusion of SLC6A3-containing transport vesicles with the plasma membrane. The protein is Pancreatic lipase-related protein 2 of Homo sapiens (Human).